We begin with the raw amino-acid sequence, 162 residues long: Phosphopantetheine adenylyltransferase (162 aa).

Residue T9 participates in substrate binding. Residues 9–10 and H17 each bind ATP; that span reads TF. Substrate-binding residues include K41, L77, and R91. Residues 92-94, E102, and 127-133 contribute to the ATP site; these read GLR and RQAIASK.

The protein belongs to the bacterial CoaD family. As to quaternary structure, homohexamer. Requires Mg(2+) as cofactor.

The protein localises to the cytoplasm. It carries out the reaction (R)-4'-phosphopantetheine + ATP + H(+) = 3'-dephospho-CoA + diphosphate. It functions in the pathway cofactor biosynthesis; coenzyme A biosynthesis; CoA from (R)-pantothenate: step 4/5. Reversibly transfers an adenylyl group from ATP to 4'-phosphopantetheine, yielding dephospho-CoA (dPCoA) and pyrophosphate. The chain is Phosphopantetheine adenylyltransferase from Cereibacter sphaeroides (strain ATCC 17025 / ATH 2.4.3) (Rhodobacter sphaeroides).